The primary structure comprises 1615 residues: Regulating synaptic membrane exocytosis protein 1 (1615 aa).

The interval 1-26 (MSSAVGPRGPRPPTVPPPMQELPDLS) is disordered. Pro residues predominate over residues 9 to 20 (GPRPPTVPPPMQ). The RabBD domain occupies 22–205 (LPDLSHLTEE…TKSGAWFFGS (184 aa)). The FYVE-type zinc finger occupies 133–193 (KDDAPTCGIC…VCNLCRKQQE (61 aa)). Cys139, Cys142, Cys155, Cys158, Cys163, Cys166, Cys185, and Cys188 together coordinate Zn(2+). The segment at 205–569 (SGPQQPSQDG…CEDVELESES (365 aa)) is disordered. Polar residues predominate over residues 206-222 (GPQQPSQDGTLSDTATG). The span at 227 to 240 (VPREKKARLQERSR) shows a compositional bias: basic and acidic residues. Over residues 241 to 256 (SQTPLSTAAVSSQDTA) the composition is skewed to polar residues. A compositionally biased stretch (basic and acidic residues) spans 327–379 (ADERERKERRETRRLEKGRSQDYSDRPEKRDNGRVAEDQKQRKEEEYQTRYRS). Residues 399-410 (MHARVSRARHER) show a composition bias toward basic residues. Over residues 421-459 (EAAAAAPAEATAGKRAPATARVSPPESPRARAAAAQPPT) the composition is skewed to low complexity. Positions 460 to 475 (EHGPPPPRPAPGPAEP) are enriched in pro residues. The span at 476 to 489 (PEPRVPEPLRKQGR) shows a compositional bias: basic and acidic residues. Residues 511-523 (RNDSLSSDQSESV) show a composition bias toward polar residues. Phosphoserine is present on Ser514. Over residues 529–541 (KPHRPKRGGKRRQ) the composition is skewed to basic residues. A compositionally biased stretch (acidic residues) spans 559–569 (SCEDVELESES). Phosphoserine is present on Ser592. The 87-residue stretch at 619 to 705 (RTTMPKESGA…EPQVEIIVSR (87 aa)) folds into the PDZ domain. Residues 712 to 746 (RIPESSHPPLESSSSSFESQKMERPSISVISPTSP) are disordered. Low complexity predominate over residues 714–730 (PESSHPPLESSSSSFES). Phosphoserine occurs at positions 742 and 745. A C2 1 domain is found at 756–879 (LPGQLSVKLW…ALLDDEPHWY (124 aa)). A disordered region spans residues 884–1201 (HDESSLPLPQ…RQLPQVPVRS (318 aa)). Ser895 carries the post-translational modification Phosphoserine. Positions 949–958 (ATTLTVPEQQ) are enriched in polar residues. Ser991 carries the post-translational modification Phosphoserine. Basic and acidic residues predominate over residues 1006-1023 (RHHDASRSPADHRSRHVE). Ser1045 bears the Phosphoserine mark. Residues 1078–1092 (SPERERHSRKSERCS) show a composition bias toward basic and acidic residues. A compositionally biased stretch (polar residues) spans 1173–1187 (QGSPTQSPPADTSFG). The residue at position 1175 (Ser1175) is a Phosphoserine. The residue at position 1177 (Thr1177) is a Phosphothreonine. A phosphoserine mark is found at Ser1179, Ser1231, Ser1233, Ser1234, Ser1262, Ser1263, and Ser1265. A disordered region spans residues 1256–1313 (DNASAKSSDSDVSDVSAISRASSTSRLSSTSFMSEQSERPRGRISSFTPKMQGRRMGT). Positions 1268 to 1289 (SDVSAISRASSTSRLSSTSFMS) are enriched in low complexity. Ser1339 carries the phosphoserine modification. The segment at 1368 to 1397 (RSRSTSQLSQTESGHKKLKSTIQRSTETGM) is disordered. One can recognise a C2 2 domain in the interval 1461-1579 (AMGDIQIGME…DLSSMVIGWY (119 aa)). Phosphoserine is present on residues Ser1600, Ser1603, Ser1606, and Ser1615.

As to quaternary structure, interacts with RAB3C, RAB10, RAB26 and RAB37. Binds SNAP25, SYT1 and CACNA1B. Interaction with SYT1 is enhanced by calcium ions. Interaction with SNAP25 is weaker in the presence of calcium ions. Binds RAB3A, RAB3B and RAB3D that have been activated by GTP-binding. Binds UNC13A. Interacts with TSPOAP1 and RIMBP2. Interacts with PPFIA3 and PPFIA4. Interacts with ERC1. Phosphorylated by BRSK1. In terms of tissue distribution, highly expressed in hippocampus, brain cortex, cerebellum and olfactory bulb. Detected at lower levels in midbrain, hindbrain and spinal cord. Detected retina and in spinal cord motor neurons.

The protein localises to the cell membrane. The protein resides in the synapse. It localises to the presynaptic cell membrane. Functionally, rab effector involved in exocytosis. May act as scaffold protein that regulates neurotransmitter release at the active zone. Essential for maintaining normal probability of neurotransmitter release and for regulating release during short-term synaptic plasticity. Plays a role in dendrite formation by melanocytes. The sequence is that of Regulating synaptic membrane exocytosis protein 1 (Rims1) from Rattus norvegicus (Rat).